Here is a 341-residue protein sequence, read N- to C-terminus: Killer cell immunoglobulin-like receptor 2DL3 (341 aa).

The N-terminal stretch at 1–21 (MSLMVVSMVCVGFFLLQGAWP) is a signal peptide. At 22 to 245 (HEGVHRKPSL…SETGNPRHLH (224 aa)) the chain is on the extracellular side. Ig-like C2-type domains are found at residues 42–107 (EETV…VTHS) and 142–205 (GESV…FRDS). Cystine bridges form between Cys49-Cys100 and Cys149-Cys198. Residues Asn84, Asn178, and Asn211 are each glycosylated (N-linked (GlcNAc...) asparagine). The interval 220 to 239 (VTGNPSNSWPSPTEPSSETG) is disordered. Positions 223-239 (NPSNSWPSPTEPSSETG) are enriched in low complexity. The helical transmembrane segment at 246-265 (VLIGTSVVIILFILLLFFLL) threads the bilayer. The Cytoplasmic segment spans residues 266 to 341 (HRWCCNKKNA…VYTELPNAEP (76 aa)).

The protein belongs to the immunoglobulin superfamily. Interacts with ARRB2.

The protein localises to the cell membrane. In terms of biological role, receptor on natural killer (NK) cells for HLA-C alleles (HLA-Cw1, HLA-Cw3 and HLA-Cw7). Inhibits the activity of NK cells thus preventing cell lysis. In Homo sapiens (Human), this protein is Killer cell immunoglobulin-like receptor 2DL3.